The primary structure comprises 516 residues: MNYIKAGKWLTVFLTFLGILLFIDLFPKEEHDQKTKSKQKPDYRAAYHFTTPDKWKNDPQKPIYFDGKYHYFYLYNRDYPKGNGTEWRHAVSEDLVHWTDEGVAIPKYTNPDGDIWTGSVVVDKENTAGFGKNALVAIVTQPSAKDKKQEQYLWYSTDKGKSFKFYSGNPVMPNPGTDDFRDPKVIWDDQDNKWVMVMAEGSKIGFYESDNLKDWHYTSGFFPEQAGMVECPDLYMMRASDGTNKWVLGASANGKPWGKPNTYAYWTGSFDGKEFKADQTEAQWLDYGFDWYGGVTFEDSKSTDPLEKRYALAWMNNWDYANNTPTMKNGFNGTDSVIRELRLKEQDGTYSLVSQPIEALEQLTVSTDEIEDQDVNGSKTLSITGDTYQLDTDLSWSELKNAGVRLRESEDQKRHIDVGIFAEGGYAYVNRAATNQPDKSNTYVESKAPYDVNKRKVHLKILVDKTTIEVFVGDGKTVFSNEVFPKPEDKGITLYSDGGTASFKNITVKHFDSIHE.

Over 1 to 5 the chain is Cytoplasmic; that stretch reads MNYIK. A helical membrane pass occupies residues 6 to 26; the sequence is AGKWLTVFLTFLGILLFIDLF. Residues 27–516 lie on the Extracellular side of the membrane; the sequence is PKEEHDQKTK…TVKHFDSIHE (490 aa). Substrate is bound by residues 55 to 58, 116 to 117, 181 to 182, Glu230, and Trp318; these read WKND, WT, and RD. Asp58 is an active-site residue.

The protein belongs to the glycosyl hydrolase 32 family.

The protein localises to the cell membrane. The enzyme catalyses Hydrolysis of (2-&gt;6)-beta-D-fructofuranan, to remove successive disaccharide residues as levanbiose, i.e. 6-(beta-D-fructofuranosyl)-D-fructose, from the end of the chain.. Its function is as follows. Catalyzes the degradation of levan mainly into levanbiose (difructose). Is not active on sucrose. In Bacillus subtilis (strain 168), this protein is Levanbiose-producing levanase (levB).